Reading from the N-terminus, the 78-residue chain is Acyl carrier protein (78 aa).

The 76-residue stretch at 2–77 (SDIAERVKKI…DAVKFIEKAQ (76 aa)) folds into the Carrier domain. O-(pantetheine 4'-phosphoryl)serine is present on serine 37.

This sequence belongs to the acyl carrier protein (ACP) family. Post-translationally, 4'-phosphopantetheine is transferred from CoA to a specific serine of apo-ACP by AcpS. This modification is essential for activity because fatty acids are bound in thioester linkage to the sulfhydryl of the prosthetic group.

The protein resides in the cytoplasm. Its pathway is lipid metabolism; fatty acid biosynthesis. Its function is as follows. Carrier of the growing fatty acid chain in fatty acid biosynthesis. The protein is Acyl carrier protein of Sinorhizobium fredii (strain NBRC 101917 / NGR234).